We begin with the raw amino-acid sequence, 334 residues long: Probable quinone oxidoreductase (334 aa).

It belongs to the zinc-containing alcohol dehydrogenase family. Quinone oxidoreductase subfamily.

The catalysed reaction is 2 a quinone + NADPH + H(+) = 2 a 1,4-benzosemiquinone + NADP(+). This is Probable quinone oxidoreductase (ZTA1) from Saccharomyces cerevisiae (strain ATCC 204508 / S288c) (Baker's yeast).